The sequence spans 309 residues: tRNA hydroxylation protein P2 (309 aa).

Belongs to the peptidase U32 family.

In terms of biological role, involved in prephenate-dependent formation of 5-hydroxyuridine (ho5U) modification at position 34 in tRNAs, the first step in 5-methoxyuridine (mo5U) biosynthesis. The sequence is that of tRNA hydroxylation protein P2 from Bacillus subtilis (strain 168).